The primary structure comprises 230 residues: MVPEYSRFYNILGYNFKDYTLLIRALTHRSKTKKNYERLEFLGDSVLSFVIAEVLYKQFTDLAEGKLSQLRSKLVKGTTLAQLASSLKMDEYIILGASEQGGNKREKILEDVFEAVIGAIYLDSDFATVKKVILKWYQPIISSINLDTIKVKDSKSKLQEILLQNALSLPEYSIETIDGKDHEQQFTVVAVSKDLNLRVKAQGTSRKKAEQKTAEKMIEMLSQQGLHEKK.

The RNase III domain maps to 5–125 (YSRFYNILGY…VIGAIYLDSD (121 aa)). E40 is a Mg(2+) binding site. D44 is an active-site residue. Mg(2+) is bound by residues D111 and E114. Residue E114 is part of the active site. Positions 153-223 (DSKSKLQEIL…AEKMIEMLSQ (71 aa)) constitute a DRBM domain.

It belongs to the ribonuclease III family. In terms of assembly, homodimer. Mg(2+) serves as cofactor.

It localises to the cytoplasm. The enzyme catalyses Endonucleolytic cleavage to 5'-phosphomonoester.. In terms of biological role, digests double-stranded RNA. Involved in the processing of primary rRNA transcript to yield the immediate precursors to the large and small rRNAs (23S and 16S). Processes some mRNAs, and tRNAs when they are encoded in the rRNA operon. Processes pre-crRNA and tracrRNA of type II CRISPR loci if present in the organism. The polypeptide is Ribonuclease 3 (Francisella tularensis subsp. holarctica (strain FTNF002-00 / FTA)).